Consider the following 174-residue polypeptide: MIPRTRTLLQSKIPITRYFARCWAPRVRYNVCRTLPAAALHTNIIAHNEVKKDDKKVHLGSFKVDKPKMMIAFTCKKCNTRSSHTMSKQAYEKGTVLISCPHCKVRHLIADHLKIFHDHHVTVEQLMKANGEQVSQDVGDLEFEDIPDSLKDVLGKYAKNNSENASQLPHPSQK.

Residues methionine 1 to histidine 47 constitute a mitochondrion transit peptide. Residues valine 64–lysine 159 form a DNL-type zinc finger. Cysteine 75, cysteine 78, cysteine 100, and cysteine 103 together coordinate Zn(2+).

As to quaternary structure, interacts with SSC1; binds to the nucleotide-free state as well as to the ADP- or ATP-bound state of SSC1. Zn(2+) serves as cofactor.

It is found in the mitochondrion inner membrane. Involved in protein import into mitochondria. Acts as a Hsp70-specific chaperone that prevents self-aggregation of the matrix Hsp70 chaperones SSC1 (mtHSP70) and SSQ1, thereby maintaining their function in mitochondrial protein import and Fe/S protein biosynthesis. May act together with PAM18 as co-chaperone to facilitate recognition and folding of imported proteins by SSC1 in the mitochondrial matrix. The polypeptide is Mitochondrial protein import protein ZIM17 (ZIM17) (Saccharomyces cerevisiae (strain AWRI1631) (Baker's yeast)).